The sequence spans 206 residues: Ribonuclease HII (206 aa).

The region spanning 14–206 (ALVCGIDEAG…FRLRQLGEKP (193 aa)) is the RNase H type-2 domain. 3 residues coordinate a divalent metal cation: Asp-20, Glu-21, and Asp-117.

Belongs to the RNase HII family. The cofactor is Mn(2+). It depends on Mg(2+) as a cofactor.

It localises to the cytoplasm. It carries out the reaction Endonucleolytic cleavage to 5'-phosphomonoester.. Functionally, endonuclease that specifically degrades the RNA of RNA-DNA hybrids. The chain is Ribonuclease HII from Pelodictyon phaeoclathratiforme (strain DSM 5477 / BU-1).